A 196-amino-acid chain; its full sequence is ATP-dependent Clp protease proteolytic subunit (196 aa).

S96 (nucleophile) is an active-site residue. H121 is an active-site residue.

It belongs to the peptidase S14 family. In terms of assembly, fourteen ClpP subunits assemble into 2 heptameric rings which stack back to back to give a disk-like structure with a central cavity, resembling the structure of eukaryotic proteasomes.

It localises to the cytoplasm. The catalysed reaction is Hydrolysis of proteins to small peptides in the presence of ATP and magnesium. alpha-casein is the usual test substrate. In the absence of ATP, only oligopeptides shorter than five residues are hydrolyzed (such as succinyl-Leu-Tyr-|-NHMec, and Leu-Tyr-Leu-|-Tyr-Trp, in which cleavage of the -Tyr-|-Leu- and -Tyr-|-Trp bonds also occurs).. Functionally, cleaves peptides in various proteins in a process that requires ATP hydrolysis. Has a chymotrypsin-like activity. Plays a major role in the degradation of misfolded proteins. This chain is ATP-dependent Clp protease proteolytic subunit, found in Streptococcus thermophilus (strain CNRZ 1066).